Consider the following 93-residue polypeptide: Acylphosphatase (93 aa).

An Acylphosphatase-like domain is found at cysteine 7–arginine 93. Active-site residues include arginine 22 and asparagine 40.

It belongs to the acylphosphatase family.

The enzyme catalyses an acyl phosphate + H2O = a carboxylate + phosphate + H(+). The polypeptide is Acylphosphatase (acyP) (Acaryochloris marina (strain MBIC 11017)).